The primary structure comprises 239 residues: 7-cyano-7-deazaguanine synthase (239 aa).

13–23 (LSGGLDSMVTA) serves as a coordination point for ATP. The Zn(2+) site is built by Cys-193, Cys-203, Cys-206, and Cys-209.

It belongs to the QueC family. The cofactor is Zn(2+).

It carries out the reaction 7-carboxy-7-deazaguanine + NH4(+) + ATP = 7-cyano-7-deazaguanine + ADP + phosphate + H2O + H(+). Its pathway is purine metabolism; 7-cyano-7-deazaguanine biosynthesis. Catalyzes the ATP-dependent conversion of 7-carboxy-7-deazaguanine (CDG) to 7-cyano-7-deazaguanine (preQ(0)). The protein is 7-cyano-7-deazaguanine synthase of Erythrobacter litoralis (strain HTCC2594).